The primary structure comprises 105 residues: BLOC-1-related complex subunit 7 (105 aa).

It belongs to the BORCS7 family. Component of the BLOC-one-related complex (BORC) which is composed of BLOC1S1, BLOC1S2, BORCS5, BORCS6, BORCS7, BORCS8, KXD1 and SNAPIN.

Its subcellular location is the lysosome membrane. Functionally, as part of the BORC complex may play a role in lysosomes movement and localization at the cell periphery. Associated with the cytosolic face of lysosomes, the BORC complex may recruit ARL8B and couple lysosomes to microtubule plus-end-directed kinesin motor. This chain is BLOC-1-related complex subunit 7, found in Bos taurus (Bovine).